A 613-amino-acid polypeptide reads, in one-letter code: Zinc metalloproteinase-disintegrin-like MTP8 (613 aa).

Residues 1 to 20 (MIEVLLVTICFTVFPYQGSP) form the signal peptide. The propeptide occupies 21 to 191 (IILESGNVND…DETIEKISQL (171 aa)). In terms of domain architecture, Peptidase M12B spans 205-401 (KYIELYVVVD…VRPQCILNKP (197 aa)). Glu208 lines the Ca(2+) pocket. Asn282 carries an N-linked (GlcNAc...) asparagine glycan. Ca(2+) is bound at residue Asp292. 3 cysteine pairs are disulfide-bonded: Cys316-Cys396, Cys356-Cys380, and Cys358-Cys363. The Zn(2+) site is built by His341, His345, and His351. 7 residues coordinate Ca(2+): Cys396, Asn399, Asn414, Phe416, Glu418, Glu421, and Asp424. The region spanning 409 to 495 (PPVCGNYFVE…KCPTDSFQRN (87 aa)) is the Disintegrin domain. Intrachain disulfides connect Cys412–Cys441, Cys423–Cys436, Cys425–Cys431, Cys435–Cys458, Cys449–Cys455, Cys454–Cys480, Cys467–Cys487, Cys474–Cys506, Cys499–Cys511, Cys518–Cys568, Cys533–Cys575, Cys543–Cys577, Cys546–Cys556, Cys563–Cys601, and Cys595–Cys606. Asn437 carries an N-linked (GlcNAc...) asparagine glycan. The D/ECD-tripeptide signature appears at 473 to 475 (DCD). Ca(2+)-binding residues include Asp475, Leu476, Glu478, and Asp490. Residues Asn550 and Asn572 are each glycosylated (N-linked (GlcNAc...) asparagine).

It belongs to the venom metalloproteinase (M12B) family. P-III subfamily. As to quaternary structure, monomer. It depends on Zn(2+) as a cofactor. As to expression, expressed by the venom gland.

The protein localises to the secreted. Snake venom zinc metalloproteinase that may impair hemostasis in the prey. In Drysdalia coronoides (White-lipped snake), this protein is Zinc metalloproteinase-disintegrin-like MTP8.